The primary structure comprises 130 residues: MTSLLEVLGAPEVSVCGNAGQPMTLPEPVRDALYNVVLALSQGKGISLVPRHLKLTTQEAADLLNISRPTLVRLLEDGRIPFEKPGRHRRVSLDALLEYQQETRSNRRAALGELSRDALGELQAALAEKK.

Functionally, possibly the antitoxin component of a type II toxin-antitoxin (TA) system. Its cognate toxin is VapC50. The chain is Putative antitoxin VapB50 from Mycobacterium tuberculosis (strain ATCC 25618 / H37Rv).